A 531-amino-acid chain; its full sequence is 2,3-bisphosphoglycerate-independent phosphoglycerate mutase (531 aa).

Mn(2+)-binding residues include Asp-15 and Ser-65. Catalysis depends on Ser-65, which acts as the Phosphoserine intermediate. Substrate contacts are provided by residues His-126, 155–156 (RD), Arg-187, Arg-193, 257–260 (RPDR), and Lys-330. Mn(2+) is bound by residues Asp-397, His-401, Asp-438, His-439, and His-456.

Belongs to the BPG-independent phosphoglycerate mutase family. In terms of assembly, monomer. Mn(2+) is required as a cofactor.

The catalysed reaction is (2R)-2-phosphoglycerate = (2R)-3-phosphoglycerate. Its pathway is carbohydrate degradation; glycolysis; pyruvate from D-glyceraldehyde 3-phosphate: step 3/5. Functionally, catalyzes the interconversion of 2-phosphoglycerate and 3-phosphoglycerate. The sequence is that of 2,3-bisphosphoglycerate-independent phosphoglycerate mutase from Thermosynechococcus vestitus (strain NIES-2133 / IAM M-273 / BP-1).